Here is a 411-residue protein sequence, read N- to C-terminus: LL-diaminopimelate aminotransferase (411 aa).

Tyrosine 15 and glycine 42 together coordinate substrate. Residues tyrosine 72, 108–109, tyrosine 132, asparagine 187, tyrosine 218, and 246–248 each bind pyridoxal 5'-phosphate; these read SK and SFS. 3 residues coordinate substrate: lysine 109, tyrosine 132, and asparagine 187. The residue at position 249 (lysine 249) is an N6-(pyridoxal phosphate)lysine. Pyridoxal 5'-phosphate-binding residues include arginine 257 and asparagine 292. Residues asparagine 292 and arginine 388 each contribute to the substrate site.

This sequence belongs to the class-I pyridoxal-phosphate-dependent aminotransferase family. LL-diaminopimelate aminotransferase subfamily. Homodimer. Requires pyridoxal 5'-phosphate as cofactor.

The enzyme catalyses (2S,6S)-2,6-diaminopimelate + 2-oxoglutarate = (S)-2,3,4,5-tetrahydrodipicolinate + L-glutamate + H2O + H(+). The protein operates within amino-acid biosynthesis; L-lysine biosynthesis via DAP pathway; LL-2,6-diaminopimelate from (S)-tetrahydrodipicolinate (aminotransferase route): step 1/1. Its function is as follows. Involved in the synthesis of meso-diaminopimelate (m-DAP or DL-DAP), required for both lysine and peptidoglycan biosynthesis. Catalyzes the direct conversion of tetrahydrodipicolinate to LL-diaminopimelate. This chain is LL-diaminopimelate aminotransferase, found in Geobacter sp. (strain M21).